Consider the following 398-residue polypeptide: MKHNNKVSKRLTMTWVPLLCISCFFLGAIFTSKLRSASSDSGSQLILQHRRDQELKIVTQDYAHEKKKSQDNDVMEEVLKTHKAIESLDKSVSMLQKQLSATHSPQQIVNVSATNSSTEGNQKNKVFMVIGINTAFSSRKRRDSLRETWMPQGEKLEKLEKEKGIVVKFMIGHSSTPNSMLDKEIDSEDAQYNDFFRLDHVEGYYNLSAKTKSFFSSAVAKWDAEFYVKIDDDVHVNLGTLASTLASHRSKPRVYIGCMKSGPVLTKKTAKYREPEFWKFGEEGNKYFRHATGQIYAISKDLATYISNNQPILHKYANEDVTLGSWFIGLEVEQIDDRNFCCGTPPDCEMRAEAGEMCVATFDWKCSGVCRSVDRMWMVHVMCGEGSKAVWDANLKLS.

The helical; Signal-anchor for type II membrane protein transmembrane segment at 11-31 threads the bilayer; the sequence is LTMTWVPLLCISCFFLGAIFT. 3 N-linked (GlcNAc...) asparagine glycosylation sites follow: Asn-110, Asn-115, and Asn-206.

The protein belongs to the glycosyltransferase 31 family. It depends on Mn(2+) as a cofactor.

Its subcellular location is the golgi apparatus membrane. It participates in protein modification; protein glycosylation. In terms of biological role, beta-1,3-galactosyltransferase that transfers galactose from UDP-galactose to substrates with a terminal glycosyl residue. The chain is Probable beta-1,3-galactosyltransferase 5 (B3GALT5) from Arabidopsis thaliana (Mouse-ear cress).